The sequence spans 190 residues: Putative cyclic ADP-D-ribose synthase ThsB (190 aa).

The protein belongs to the Thoeris B TIR-like family. In terms of assembly, homodimer.

Its subcellular location is the cytoplasm. Its activity is regulated as follows. Activated upon phage infection. Its function is as follows. TIR-like domain-containing component of the Thoeris antiviral defense system, composed of ThsA and ThsB. Expression of ThsA and ThsB in B.subtilis (strain BEST7003) confers resistance to phages SBSphiC, SBSphiJ and SPO1. Phage infection activates this protein, generating a signal molecule that in turn activates ThsA. In terms of biological role, probably hydrolyzes NAD(+) to make a cyclic ADP-D-ribose (cADPR) signaling molecule; might make 3'cADPR. The protein is Putative cyclic ADP-D-ribose synthase ThsB of Bacillus amyloliquefaciens (strain Y2) (Bacillus amyloliquefaciens subsp. plantarum (strain B9601-Y2)).